Here is a 446-residue protein sequence, read N- to C-terminus: Glutamine synthetase (446 aa).

The region spanning 15 to 102 (RDIRFVRLWF…MFCDITMPDG (88 aa)) is the GS beta-grasp domain. In terms of domain architecture, GS catalytic spans 109 to 446 (PRHVLRRQLT…PYELRTYLSL (338 aa)). Mg(2+) contacts are provided by glutamate 132 and glutamate 134. Residue glutamate 184 participates in ATP binding. Residues glutamate 189 and glutamate 196 each coordinate Mg(2+). Residue glycine 241 participates in L-glutamate binding. Residue histidine 245 participates in Mg(2+) binding. Residues 247–249 (HMS) and serine 249 each bind ATP. L-glutamate contacts are provided by arginine 298, glutamate 304, and arginine 316. ATP-binding residues include arginine 316 and arginine 321. Glutamate 336 is a Mg(2+) binding site. Arginine 338 is an L-glutamate binding site.

It belongs to the glutamine synthetase family. Oligomer of 12 subunits arranged in the form of two hexagons. In its feedback-inhibited form, interacts with TnrA in order to block its DNA-binding activity. The cofactor is Mg(2+).

The protein localises to the cytoplasm. The enzyme catalyses L-glutamate + NH4(+) + ATP = L-glutamine + ADP + phosphate + H(+). Its activity is regulated as follows. Inhibited by glutamine. Its function is as follows. Glutamine synthetase (GS) is an unusual multitasking protein that functions as an enzyme, a transcription coregulator, and a chaperone in ammonium assimilation and in the regulation of genes involved in nitrogen metabolism. It catalyzes the ATP-dependent biosynthesis of glutamine from glutamate and ammonia. Feedback-inhibited GlnA also interacts with and regulates the activity of the transcriptional regulator TnrA. During nitrogen limitation, TnrA is in its DNA-binding active state and turns on the transcription of genes required for nitrogen assimilation. Under conditions of nitrogen excess, feedback-inhibited GlnA forms a stable complex with TnrA, which inhibits its DNA-binding activity. In contrast, feedback-inhibited GlnA acts as a chaperone to stabilize the DNA-binding activity of GlnR, which represses the transcription of nitrogen assimilation genes. The protein is Glutamine synthetase of Mycobacterium bovis (strain ATCC BAA-935 / AF2122/97).